Consider the following 44-residue polypeptide: Metallothionein-4 (44 aa).

The protein belongs to the metallothionein superfamily. Type 5 family.

Functionally, this protein binds cations of several transition elements. Thought to be involved in metal ion homeostasis. The polypeptide is Metallothionein-4 (MtnD) (Drosophila melanogaster (Fruit fly)).